A 150-amino-acid polypeptide reads, in one-letter code: Endoribonuclease YbeY (150 aa).

Residues His-115, His-119, and His-125 each coordinate Zn(2+).

The protein belongs to the endoribonuclease YbeY family. It depends on Zn(2+) as a cofactor.

It is found in the cytoplasm. Its function is as follows. Single strand-specific metallo-endoribonuclease involved in late-stage 70S ribosome quality control and in maturation of the 3' terminus of the 16S rRNA. The protein is Endoribonuclease YbeY of Aquifex aeolicus (strain VF5).